A 478-amino-acid polypeptide reads, in one-letter code: JmjC domain-containing histone demethylation protein 1 (478 aa).

The PHD-type zinc-finger motif lies at Val6–His70. The JmjC domain occupies Ser242–His401. Thr294 is a binding site for substrate. His297 and Asp299 together coordinate Fe cation. A substrate-binding site is contributed by Lys314. His369 is a Fe cation binding site.

The protein belongs to the JHDM1 histone demethylase family. Requires Fe(2+) as cofactor.

The protein resides in the nucleus. The catalysed reaction is N(6),N(6)-dimethyl-L-lysyl(36)-[histone H3] + 2 2-oxoglutarate + 2 O2 = L-lysyl(36)-[histone H3] + 2 formaldehyde + 2 succinate + 2 CO2. Functionally, histone demethylase that specifically demethylates 'Lys-36' of histone H3, thereby playing a central role in histone code. The sequence is that of JmjC domain-containing histone demethylation protein 1 (JHD1) from Kluyveromyces lactis (strain ATCC 8585 / CBS 2359 / DSM 70799 / NBRC 1267 / NRRL Y-1140 / WM37) (Yeast).